Consider the following 1701-residue polypeptide: DDB1- and CUL4-associated factor homolog 1 (1701 aa).

The span at 224 to 245 (HAEQSTSNGTSIPSIKITSVDG) shows a compositional bias: polar residues. 3 disordered regions span residues 224–269 (HAEQ…RRTE), 883–906 (DRPASRSINTPILNKPLPSSGNNF), and 932–961 (RPSNAASLSSPAMATRSHSTDDDVFATPTL). The region spanning 851 to 883 (NQAELLQLIHDHLLKSKLDSVAAMLKSEAKLPD) is the LisH domain. The span at 888-906 (RSINTPILNKPLPSSGNNF) shows a compositional bias: polar residues. 4 WD repeats span residues 1086–1125 (DHDESYTKATFSVDDEHLIVGLFNGEVHWINVDTGLDEGH), 1128–1169 (CHGS…QRVH), 1171–1210 (YREDSCVKFANTTMQRIVGTCRDKATVYDTETNHVLDTYL), and 1215–1252 (GLQYEKNYASFSPDDKLIFNDGLLWDVRKKNSAIHVFD). 2 consecutive short sequence motifs (DWD box) follow at residues 1237–1245 (LLWDVRKKN) and 1275–1282 (EVYDIRTF). Disordered stretches follow at residues 1384–1559 (IGRL…DINL), 1566–1585 (EARVVENEGNNERPARPVDP), and 1641–1701 (LVRG…DDEA). 2 stretches are compositionally biased toward acidic residues: residues 1390–1423 (NEDENDEEEDEQREDHDEDEDSDESGDGDDDEEI) and 1451–1461 (DDNDTLDDLDF). Residues 1468 to 1479 (IIRRQAQRRRQR) show a composition bias toward basic residues. 2 stretches are compositionally biased toward acidic residues: residues 1494-1512 (EGSDEDGDDDEDGEGDPDF) and 1520-1543 (DLVDAVDEEVDEDELGTDGDDDDS). The segment covering 1567–1581 (ARVVENEGNNERPAR) has biased composition (basic and acidic residues). Over residues 1667-1678 (DTDEYQSEEEEI) the composition is skewed to acidic residues.

This sequence belongs to the VPRBP/DCAF1 family. Component of the cul4-rbx1-ddb1-dcaf1 E3 ubiquitin-protein ligase complex.

The protein localises to the nucleus. Its pathway is protein modification; protein ubiquitination. Component of the cul4-rbx1-ddb1-dcaf1 E3 ubiquitin-protein ligase complex, dcaf1 may function as the substrate recognition module within this complex. This chain is DDB1- and CUL4-associated factor homolog 1 (dcaf-1), found in Caenorhabditis elegans.